Reading from the N-terminus, the 39-residue chain is Photosystem II reaction center protein J (39 aa).

A helical transmembrane segment spans residues 7-27; it reads IPLWLVATIGGIAVLTVLGLF.

Belongs to the PsbJ family. As to quaternary structure, PSII is composed of 1 copy each of membrane proteins PsbA, PsbB, PsbC, PsbD, PsbE, PsbF, PsbH, PsbI, PsbJ, PsbK, PsbL, PsbM, PsbT, PsbX, PsbY, PsbZ, Psb30/Ycf12, at least 3 peripheral proteins of the oxygen-evolving complex and a large number of cofactors. It forms dimeric complexes.

It localises to the plastid. The protein localises to the chloroplast thylakoid membrane. Its function is as follows. One of the components of the core complex of photosystem II (PSII). PSII is a light-driven water:plastoquinone oxidoreductase that uses light energy to abstract electrons from H(2)O, generating O(2) and a proton gradient subsequently used for ATP formation. It consists of a core antenna complex that captures photons, and an electron transfer chain that converts photonic excitation into a charge separation. The protein is Photosystem II reaction center protein J of Cyanidioschyzon merolae (strain NIES-3377 / 10D) (Unicellular red alga).